The primary structure comprises 499 residues: Eukaryotic peptide chain release factor GTP-binding subunit ERF3A (499 aa).

The segment at 1-69 is disordered; the sequence is MELSEPIVEN…PKSVVAPPGA (69 aa). Residues 41-50 are compositionally biased toward basic and acidic residues; sequence RPPEESAHEM. The tr-type G domain maps to 72–298; that stretch reads KEHVNVVFIG…DNLPNFNRSV (227 aa). Positions 81 to 88 are G1; the sequence is GHVDAGKS. Position 84–89 (84–89) interacts with GTP; the sequence is DAGKST. The tract at residues 137 to 141 is G2; it reads GKTVE. Residues 158–161 are G3; sequence DAPG. GTP-binding positions include 220–223 and 262–264; these read NKMD and SGL. The tract at residues 220-223 is G4; that stretch reads NKMD. Residues 262–264 are G5; the sequence is SGL.

The protein belongs to the TRAFAC class translation factor GTPase superfamily. Classic translation factor GTPase family. ERF3 subfamily. As to quaternary structure, component of the eRF1-eRF3-GTP ternary complex, composed of ETF1/ERF1 and ERF3 (GSPT1/ERF3A or GSPT2/ERF3B) and GTP. Component of the transient SURF (SMG1-UPF1-eRF1-eRF3) complex. The ETF1-GSPT1 complex interacts with JMJD4. Interacts with PABPC1. Interacts with SHFL.

The catalysed reaction is GTP + H2O = GDP + phosphate + H(+). In terms of biological role, GTPase component of the eRF1-eRF3-GTP ternary complex, a ternary complex that mediates translation termination in response to the termination codons UAA, UAG and UGA. GSPT1/ERF3A mediates ETF1/ERF1 delivery to stop codons: The eRF1-eRF3-GTP complex binds to a stop codon in the ribosomal A-site. GTP hydrolysis by GSPT1/ERF3A induces a conformational change that leads to its dissociation, permitting ETF1/ERF1 to accommodate fully in the A-site. Component of the transient SURF complex which recruits UPF1 to stalled ribosomes in the context of nonsense-mediated decay (NMD) of mRNAs containing premature stop codons. Required for SHFL-mediated translation termination which inhibits programmed ribosomal frameshifting (-1PRF) of mRNA from viruses and cellular genes. In Homo sapiens (Human), this protein is Eukaryotic peptide chain release factor GTP-binding subunit ERF3A (GSPT1).